The primary structure comprises 659 residues: UDP-glucuronate:xylan alpha-glucuronosyltransferase 1 (659 aa).

A compositionally biased stretch (low complexity) spans 1-14; it reads MANSPAAPAPTTTT. The interval 1-20 is disordered; that stretch reads MANSPAAPAPTTTTGGDSRR. A helical; Signal-anchor for type II membrane protein membrane pass occupies residues 70–90; sequence FQIVKLLLFILLSATLFTIIY. Mn(2+) contacts are provided by D416 and D418. Substrate-binding positions include 416 to 418, 445 to 447, 472 to 476, and 526 to 531; these read DAD, NSG, NGGDQ, and HYLGMK. H526 contributes to the Mn(2+) binding site.

Belongs to the glycosyltransferase 8 family. Glycogenin subfamily. Requires Mn(2+) as cofactor.

It is found in the golgi apparatus membrane. In terms of biological role, glycosyltransferase required for the addition of both glucuronic acid and 4-O-methylglucuronic acid branches to xylan in stem cell walls. In association with GUX2, is responsible for almost all of the substitutions of the xylan backbone in stem glucuronoxylan. This is UDP-glucuronate:xylan alpha-glucuronosyltransferase 1 (GUX1) from Arabidopsis thaliana (Mouse-ear cress).